A 148-amino-acid chain; its full sequence is Small ribosomal subunit protein bS6 (148 aa).

Residues 96–148 are disordered; that stretch reads HEEGQSAMLTRRDDRRERDGDDRPRRREGGFDRGDRGDRGPRRPRDNEAGEGA.

Belongs to the bacterial ribosomal protein bS6 family.

In terms of biological role, binds together with bS18 to 16S ribosomal RNA. This Brucella abortus biovar 1 (strain 9-941) protein is Small ribosomal subunit protein bS6.